The primary structure comprises 431 residues: Enolase (431 aa).

Glutamine 164 lines the (2R)-2-phosphoglycerate pocket. The active-site Proton donor is the glutamate 206. Mg(2+) is bound by residues aspartate 243, glutamate 288, and aspartate 315. 4 residues coordinate (2R)-2-phosphoglycerate: lysine 340, arginine 369, serine 370, and lysine 391. Residue lysine 340 is the Proton acceptor of the active site.

It belongs to the enolase family. The cofactor is Mg(2+).

It is found in the cytoplasm. The protein resides in the secreted. It localises to the cell surface. It catalyses the reaction (2R)-2-phosphoglycerate = phosphoenolpyruvate + H2O. The protein operates within carbohydrate degradation; glycolysis; pyruvate from D-glyceraldehyde 3-phosphate: step 4/5. Functionally, catalyzes the reversible conversion of 2-phosphoglycerate (2-PG) into phosphoenolpyruvate (PEP). It is essential for the degradation of carbohydrates via glycolysis. This Fervidobacterium nodosum (strain ATCC 35602 / DSM 5306 / Rt17-B1) protein is Enolase.